The sequence spans 214 residues: Transcriptional activator protein ExaE (214 aa).

The Response regulatory domain maps to 2 to 118 (GILLVDDHPM…VVLEAVRRVL (117 aa)). 4-aspartylphosphate is present on aspartate 53. Positions 143–208 (GNARLQGLTQ…ELVHLAIEAG (66 aa)) constitute an HTH luxR-type domain. Residues 167-186 (TRLIAQQLCISAKTVSNYLT) constitute a DNA-binding region (H-T-H motif).

Functionally, positive regulator of the expression of the gene qedA and the activity of ADH I but does not affect the activities of ADH IIB or ADH IIG. The polypeptide is Transcriptional activator protein ExaE (Pseudomonas putida (Arthrobacter siderocapsulatus)).